A 509-amino-acid polypeptide reads, in one-letter code: Dihydrolipoyl dehydrogenase, mitochondrial (509 aa).

Residues methionine 1–tyrosine 35 constitute a mitochondrion transit peptide. Position 66 is an N6-acetyllysine; alternate (lysine 66). An N6-succinyllysine; alternate modification is found at lysine 66. FAD is bound by residues glutamate 71 to cysteine 80 and lysine 89. Cysteine 80 and cysteine 85 are disulfide-bonded. An N6-acetyllysine; alternate mark is found at lysine 104, lysine 122, lysine 132, and lysine 143. An N6-succinyllysine; alternate mark is found at lysine 104, lysine 122, lysine 132, and lysine 143. Residue glycine 154 coordinates FAD. Lysine 159 and lysine 166 each carry N6-succinyllysine. Residue threonine 183 to serine 185 participates in FAD binding. NAD(+)-binding positions include glycine 220–glutamate 227 and glutamate 243. An N6-succinyllysine mark is found at lysine 273 and lysine 277. Valine 278 contributes to the NAD(+) binding site. Phosphoserine is present on residues serine 285 and serine 297. Glycine 314 provides a ligand contact to NAD(+). N6-acetyllysine is present on lysine 346. FAD contacts are provided by residues aspartate 355 and methionine 361–histidine 364. Lysine 410 carries the post-translational modification N6-acetyllysine; alternate. Lysine 410 carries the N6-succinyllysine; alternate modification. Lysine 417 and lysine 420 each carry N6-acetyllysine. Lysine 430 is modified (N6-succinyllysine). Catalysis depends on histidine 487, which acts as the Proton acceptor. Serine 502 carries the phosphoserine modification. Lysine 505 bears the N6-acetyllysine; alternate mark. Residue lysine 505 is modified to N6-succinyllysine; alternate.

The protein belongs to the class-I pyridine nucleotide-disulfide oxidoreductase family. In terms of assembly, homodimer. Part of the multimeric pyruvate dehydrogenase complex that contains multiple copies of pyruvate dehydrogenase (subunits PDHA (PDHA1 or PDHA2) and PDHB, E1), dihydrolipoamide acetyltransferase (DLAT, E2) and lipoamide dehydrogenase (DLD, E3). These subunits are bound to an inner core composed of about 48 DLAT and 12 PDHX molecules (by non covalent bonds). The 2-oxoglutarate dehydrogenase complex is composed of OGDH (2-oxoglutarate dehydrogenase; E1), DLST (dihydrolipoamide succinyltransferase; E2), DLD (dihydrolipoamide dehydrogenase; E3) and the assembly factor KGD4. It contains multiple copies of the three enzymatic components (E1, E2 and E3). In the nucleus, the 2-oxoglutarate dehydrogenase complex associates with KAT2A. Interacts with PDHX. FAD serves as cofactor. Post-translationally, tyrosine phosphorylated.

The protein resides in the mitochondrion matrix. Its subcellular location is the nucleus. It localises to the cell projection. It is found in the cilium. The protein localises to the flagellum. The protein resides in the cytoplasmic vesicle. Its subcellular location is the secretory vesicle. It localises to the acrosome. The catalysed reaction is N(6)-[(R)-dihydrolipoyl]-L-lysyl-[protein] + NAD(+) = N(6)-[(R)-lipoyl]-L-lysyl-[protein] + NADH + H(+). Its function is as follows. Lipoamide dehydrogenase is a component of the glycine cleavage system as well as an E3 component of three alpha-ketoacid dehydrogenase complexes (pyruvate-, alpha-ketoglutarate-, and branched-chain amino acid-dehydrogenase complex). The 2-oxoglutarate dehydrogenase complex is mainly active in the mitochondrion. A fraction of the 2-oxoglutarate dehydrogenase complex also localizes in the nucleus and is required for lysine succinylation of histones: associates with KAT2A on chromatin and provides succinyl-CoA to histone succinyltransferase KAT2A. In monomeric form may have additional moonlighting function as serine protease. Involved in the hyperactivation of spermatazoa during capacitation and in the spermatazoal acrosome reaction. This is Dihydrolipoyl dehydrogenase, mitochondrial (DLD) from Canis lupus familiaris (Dog).